A 118-amino-acid polypeptide reads, in one-letter code: Ribulose bisphosphate carboxylase small subunit (118 aa).

The protein belongs to the RuBisCO small chain family. As to quaternary structure, heterohexadecamer of 8 large and 8 small subunits.

Its function is as follows. RuBisCO catalyzes two reactions: the carboxylation of D-ribulose 1,5-bisphosphate, the primary event in carbon dioxide fixation, as well as the oxidative fragmentation of the pentose substrate. Both reactions occur simultaneously and in competition at the same active site. Although the small subunit is not catalytic it is essential for maximal activity. The sequence is that of Ribulose bisphosphate carboxylase small subunit from Thiobacillus denitrificans (strain ATCC 25259 / T1).